The sequence spans 218 residues: Adapter protein MecA (218 aa).

Belongs to the MecA family. Homodimer.

In terms of biological role, enables the recognition and targeting of unfolded and aggregated proteins to the ClpC protease or to other proteins involved in proteolysis. This Exiguobacterium sp. (strain ATCC BAA-1283 / AT1b) protein is Adapter protein MecA.